A 65-amino-acid polypeptide reads, in one-letter code: Small ribosomal subunit protein eS17 (65 aa).

Belongs to the eukaryotic ribosomal protein eS17 family.

The sequence is that of Small ribosomal subunit protein eS17 from Archaeoglobus fulgidus (strain ATCC 49558 / DSM 4304 / JCM 9628 / NBRC 100126 / VC-16).